Consider the following 214-residue polypeptide: Probable nicotinate-nucleotide adenylyltransferase (214 aa).

Belongs to the NadD family.

The enzyme catalyses nicotinate beta-D-ribonucleotide + ATP + H(+) = deamido-NAD(+) + diphosphate. The protein operates within cofactor biosynthesis; NAD(+) biosynthesis; deamido-NAD(+) from nicotinate D-ribonucleotide: step 1/1. Catalyzes the reversible adenylation of nicotinate mononucleotide (NaMN) to nicotinic acid adenine dinucleotide (NaAD). This is Probable nicotinate-nucleotide adenylyltransferase from Mycolicibacterium vanbaalenii (strain DSM 7251 / JCM 13017 / BCRC 16820 / KCTC 9966 / NRRL B-24157 / PYR-1) (Mycobacterium vanbaalenii).